The following is a 301-amino-acid chain: Phosphoribosylaminoimidazole-succinocarboxamide synthase (301 aa).

It belongs to the SAICAR synthetase family.

It catalyses the reaction 5-amino-1-(5-phospho-D-ribosyl)imidazole-4-carboxylate + L-aspartate + ATP = (2S)-2-[5-amino-1-(5-phospho-beta-D-ribosyl)imidazole-4-carboxamido]succinate + ADP + phosphate + 2 H(+). Its pathway is purine metabolism; IMP biosynthesis via de novo pathway; 5-amino-1-(5-phospho-D-ribosyl)imidazole-4-carboxamide from 5-amino-1-(5-phospho-D-ribosyl)imidazole-4-carboxylate: step 1/2. The protein is Phosphoribosylaminoimidazole-succinocarboxamide synthase of Mycolicibacterium vanbaalenii (strain DSM 7251 / JCM 13017 / BCRC 16820 / KCTC 9966 / NRRL B-24157 / PYR-1) (Mycobacterium vanbaalenii).